The sequence spans 615 residues: MVKLVCAIVGVAGSAFPVDIDASQLVGDLKKAIKAENAMTFTGDAKDLQLFLAKQPVDDESGKEVVPVYRPSAEEMKEESFKWLPDEHRAALKLVEGESDDYIHALTAGEPILGSKTLTTWFYTKNNMELPSSEQIHVLVVVPEQGSSVPTVSQDGVFDHCINPFFLQFRTVDKVGDWLEFSSLLPLTRRQKLYIRSSYQVIANHALFNPNVGMVKYAVVTGTPGVGKSVFVYYVLWRLIKEKKRVLLFDNNGLFYFDGSTMLICLALPSKFNEQFWSPDLWCLVDSMDPTSIPGLPYRLCSVLLASTPRRDCIGEFKKQPPTADVFYMPLWSKEELATIAPMYPHAAAVWENRFDCLGGVPRLVLQDIETDPQALLMSACSSCSLDDCIMLVSIYSEINSKTKIVQTLIHIHSQEPYRKYKVVYASDLAMQLIVRTKWRFDRAKLQSLLGSSDGNPLAQSLCGYIFEFYSMDRLEQGGTFVYRELFSGKRKRTPADGTIDIPRSSQPRQVAERVEVGQHAKQLYVPGTSNYTAIDAWMPQFGGFQMTVGKTHDIKGGAADDLAKLGQNGNRLFFLLPPLYYKTFTKKTPQTIKQYAILVPYPEVRNELSASTLQ.

Residues 1 to 17 form the signal peptide; that stretch reads MVKLVCAIVGVAGSAFP. The segment at 18 to 54 is LQLFLAK domain; the sequence is VDIDASQLVGDLKKAIKAENAMTFTGDAKDLQLFLAK. Positions 55 to 136 are DWL domain; sequence QPVDDESGKE…NMELPSSEQI (82 aa). The HVLVXXP motif signature appears at 137–143; that stretch reads HVLVVVP. The N-linked (GlcNAc...) asparagine glycan is linked to asparagine 531.

The protein belongs to the Crinkler effector family.

It is found in the secreted. Its subcellular location is the host nucleus. Secreted effector that elicits necrosis in host plants, a characteristic of plant innate immunity. This Phytophthora infestans (Potato late blight agent) protein is Crinkler effector protein 15.